Reading from the N-terminus, the 196-residue chain is Cytochrome c biogenesis ATP-binding export protein CcmA (196 aa).

One can recognise an ABC transporter domain in the interval 2-195 (LSFHQLKFNI…HIKSAQILQL (194 aa)). Residue 34 to 41 (GANGCGKT) participates in ATP binding.

This sequence belongs to the ABC transporter superfamily. CcmA exporter (TC 3.A.1.107) family. In terms of assembly, the complex is composed of two ATP-binding proteins (CcmA) and two transmembrane proteins (CcmB).

The protein resides in the cell inner membrane. The enzyme catalyses heme b(in) + ATP + H2O = heme b(out) + ADP + phosphate + H(+). In terms of biological role, part of the ABC transporter complex CcmAB involved in the biogenesis of c-type cytochromes; once thought to export heme, this seems not to be the case, but its exact role is uncertain. Responsible for energy coupling to the transport system. This chain is Cytochrome c biogenesis ATP-binding export protein CcmA, found in Rickettsia bellii (strain RML369-C).